The chain runs to 423 residues: tRNA(Ile)-lysidine synthase (423 aa).

43-48 (SSGVDS) provides a ligand contact to ATP.

This sequence belongs to the tRNA(Ile)-lysidine synthase family.

The protein localises to the cytoplasm. It carries out the reaction cytidine(34) in tRNA(Ile2) + L-lysine + ATP = lysidine(34) in tRNA(Ile2) + AMP + diphosphate + H(+). Its function is as follows. Ligates lysine onto the cytidine present at position 34 of the AUA codon-specific tRNA(Ile) that contains the anticodon CAU, in an ATP-dependent manner. Cytidine is converted to lysidine, thus changing the amino acid specificity of the tRNA from methionine to isoleucine. This chain is tRNA(Ile)-lysidine synthase, found in Helicobacter hepaticus (strain ATCC 51449 / 3B1).